The following is a 98-amino-acid chain: Large ribosomal subunit protein uL23 (98 aa).

This sequence belongs to the universal ribosomal protein uL23 family. As to quaternary structure, part of the 50S ribosomal subunit. Contacts protein L29, and trigger factor when it is bound to the ribosome.

Functionally, one of the early assembly proteins it binds 23S rRNA. One of the proteins that surrounds the polypeptide exit tunnel on the outside of the ribosome. Forms the main docking site for trigger factor binding to the ribosome. The chain is Large ribosomal subunit protein uL23 from Roseobacter denitrificans (strain ATCC 33942 / OCh 114) (Erythrobacter sp. (strain OCh 114)).